The chain runs to 285 residues: Bifunctional protein FolD (285 aa).

NADP(+) is bound at residue 166–168; the sequence is GAS.

This sequence belongs to the tetrahydrofolate dehydrogenase/cyclohydrolase family. As to quaternary structure, homodimer.

It catalyses the reaction (6R)-5,10-methylene-5,6,7,8-tetrahydrofolate + NADP(+) = (6R)-5,10-methenyltetrahydrofolate + NADPH. It carries out the reaction (6R)-5,10-methenyltetrahydrofolate + H2O = (6R)-10-formyltetrahydrofolate + H(+). It participates in one-carbon metabolism; tetrahydrofolate interconversion. Functionally, catalyzes the oxidation of 5,10-methylenetetrahydrofolate to 5,10-methenyltetrahydrofolate and then the hydrolysis of 5,10-methenyltetrahydrofolate to 10-formyltetrahydrofolate. This chain is Bifunctional protein FolD, found in Thioalkalivibrio sulfidiphilus (strain HL-EbGR7).